A 356-amino-acid polypeptide reads, in one-letter code: Syntaxin-7A (356 aa).

The Cytoplasmic segment spans residues 1–333 (MYNNNNNFGG…NQKSSRNKMC (333 aa)). Low complexity-rich tracts occupy residues 32 to 74 (NNNN…FDNN) and 207 to 224 (NNNS…NNQQ). Disordered regions lie at residues 32-88 (NNNN…NSDY) and 187-247 (EKTT…RRQQ). Residues 233–244 (EDEHQSLMESSR) show a composition bias toward basic and acidic residues. The region spanning 259–321 (NSIIQERDEG…KEGVNHLREA (63 aa)) is the t-SNARE coiled-coil homology domain. The chain crosses the membrane as a helical; Anchor for type IV membrane protein span at residues 334-354 (WIVLILLIVCAVLGVILFFTL). Topologically, residues 355–356 (RK) are vesicular.

This sequence belongs to the syntaxin family. As to quaternary structure, component of the SNARE complex composed of syn7A, syn8A, vamp7A and vti1A. Interacts with nsfA, snpA and snpC.

It localises to the endosome membrane. Functionally, involved in the targeting and/or fusion of transport vesicles to their target membrane during transport of proteins from the early endosome to the lysosome. Required for fusion of late endosomes with lysosomes and homotypic lysosomal fusion. May be involved in protein trafficking from the plasma membrane to the early endosome (EE) as well as in homotypic fusion of endocytic organelles. In Dictyostelium discoideum (Social amoeba), this protein is Syntaxin-7A.